The primary structure comprises 307 residues: Homoserine O-acetyltransferase (307 aa).

Cys-142 serves as the catalytic Acyl-thioester intermediate. Residues Lys-163 and Ser-192 each contribute to the substrate site. His-235 acts as the Proton acceptor in catalysis. The active site involves Glu-237. Arg-249 is a substrate binding site.

This sequence belongs to the MetA family.

The protein resides in the cytoplasm. It carries out the reaction L-homoserine + acetyl-CoA = O-acetyl-L-homoserine + CoA. Its pathway is amino-acid biosynthesis; L-methionine biosynthesis via de novo pathway; O-acetyl-L-homoserine from L-homoserine: step 1/1. Transfers an acetyl group from acetyl-CoA to L-homoserine, forming acetyl-L-homoserine. The polypeptide is Homoserine O-acetyltransferase (Desulfitobacterium hafniense (strain DSM 10664 / DCB-2)).